Consider the following 214-residue polypeptide: Urease accessory protein UreG (214 aa).

Positions 1 to 20 are disordered; it reads MSQLHAVPGRTKKLPPLRVG. Position 23-30 (23-30) interacts with GTP; sequence GPVGSGKT.

The protein belongs to the SIMIBI class G3E GTPase family. UreG subfamily. As to quaternary structure, homodimer. UreD, UreF and UreG form a complex that acts as a GTP-hydrolysis-dependent molecular chaperone, activating the urease apoprotein by helping to assemble the nickel containing metallocenter of UreC. The UreE protein probably delivers the nickel.

It is found in the cytoplasm. In terms of biological role, facilitates the functional incorporation of the urease nickel metallocenter. This process requires GTP hydrolysis, probably effectuated by UreG. The polypeptide is Urease accessory protein UreG (Leptothrix cholodnii (strain ATCC 51168 / LMG 8142 / SP-6) (Leptothrix discophora (strain SP-6))).